Reading from the N-terminus, the 384-residue chain is Odorant receptor 33c (384 aa).

The Cytoplasmic segment spans residues M1–Y35. A helical transmembrane segment spans residues V36–L56. Residues L57–E63 are Extracellular-facing. Residues F64–H84 traverse the membrane as a helical segment. At L85 to C128 the chain is on the cytoplasmic side. A helical transmembrane segment spans residues L129–I149. Topologically, residues S150–R169 are extracellular. The chain crosses the membrane as a helical span at residues F170–G190. At L191 to R251 the chain is on the cytoplasmic side. A helical transmembrane segment spans residues T252 to V272. The Extracellular segment spans residues S273–Y274. Residues M275–V295 form a helical membrane-spanning segment. Residues C296–E358 lie on the Cytoplasmic side of the membrane. Residues L359–V379 traverse the membrane as a helical segment. Residues R380–I384 lie on the Extracellular side of the membrane.

It belongs to the insect chemoreceptor superfamily. Heteromeric odorant receptor channel (TC 1.A.69) family. Or2a subfamily. As to quaternary structure, interacts with Orco. Complexes exist early in the endomembrane system in olfactory sensory neurons (OSNs), coupling these complexes to the conserved ciliary trafficking pathway. Expressed in the antenna and in a subset of 18 olfactory receptor neurons in the maxillary palp.

Its subcellular location is the cell membrane. Odorant receptor which mediates acceptance or avoidance behavior, depending on its substrates. The odorant receptor repertoire encodes a large collection of odor stimuli that vary widely in identity, intensity, and duration. May form a complex with Orco to form odorant-sensing units, providing sensitive and prolonged odorant signaling and calcium permeability. The chain is Odorant receptor 33c (Or33c) from Drosophila melanogaster (Fruit fly).